The following is a 124-amino-acid chain: Fluoride-specific ion channel FluC (124 aa).

Transmembrane regions (helical) follow at residues 1–21 (MIGV…LRFA), 34–54 (FYAA…YLYG), 62–82 (VPLA…TTFS), and 101–121 (FSYL…GLIL). Na(+)-binding residues include G76 and T79.

It belongs to the fluoride channel Fluc/FEX (TC 1.A.43) family.

It localises to the cell inner membrane. The enzyme catalyses fluoride(in) = fluoride(out). Its activity is regulated as follows. Na(+) is not transported, but it plays an essential structural role and its presence is essential for fluoride channel function. In terms of biological role, fluoride-specific ion channel. Important for reducing fluoride concentration in the cell, thus reducing its toxicity. The sequence is that of Fluoride-specific ion channel FluC from Azotobacter vinelandii (strain DJ / ATCC BAA-1303).